Here is a 402-residue protein sequence, read N- to C-terminus: Multidrug resistance protein MdtH (402 aa).

Transmembrane regions (helical) follow at residues 13–33, 34–54, 99–116, 139–159, 165–185, 214–234, 244–264, 277–297, 340–360, and 368–388; these read YFLL…FPLI, SIRF…ALGL, PWIL…GTLF, LLMM…SWLL, YVCW…AWLL, VLTL…LPIM, AVKW…YPIA, LMFG…STTL, LGLA…YDMG, and LPWA…YWQF.

It belongs to the major facilitator superfamily. DHA1 family. MdtH (TC 2.A.1.2.21) subfamily.

Its subcellular location is the cell inner membrane. This chain is Multidrug resistance protein MdtH, found in Edwardsiella ictaluri (strain 93-146).